We begin with the raw amino-acid sequence, 317 residues long: Melanocyte-stimulating hormone receptor (317 aa).

The Extracellular segment spans residues 1–37; sequence MPVQGSQRRLLGSLNSTPTATPHLGLAANQTGARCLE. Asn-29 carries an N-linked (GlcNAc...) asparagine glycan. The chain crosses the membrane as a helical span at residues 38-63; the sequence is VSIPDGLFLSLGLVSLVENVLVVTAI. At 64-72 the chain is on the cytoplasmic side; the sequence is AKNRNLHSP. The chain crosses the membrane as a helical span at residues 73–93; that stretch reads MYCFICCLALSDLLVSGSNML. Over 94 to 118 the chain is Extracellular; the sequence is ETAVILLLEAGALAARAAVVQQLDN. The chain crosses the membrane as a helical span at residues 119-140; the sequence is VIDVITCSSMLSSLCFLGAIAV. Residues 141 to 163 are Cytoplasmic-facing; it reads DRYISIFYALRYHSIVTLPRARR. Residues 164–183 traverse the membrane as a helical segment; that stretch reads AVAAIWVASVLFSMLFIAYY. Topologically, residues 184-191 are extracellular; that stretch reads DHAAVLLC. Residues 192-211 form a helical membrane-spanning segment; sequence LVVFFLAMLVLMAVLYVHML. At 212–240 the chain is on the cytoplasmic side; it reads ARACQHAQGIARLHKRQCPAHQGFGLKGA. A helical transmembrane segment spans residues 241–266; sequence ATLTILLGIFFLCWGPFFLHLTLIVL. Over 267–279 the chain is Extracellular; the sequence is CPQHPTCSCIFKN. Residues 280–300 traverse the membrane as a helical segment; it reads FNLFLALIICNAIIDPLIYAF. Over 301 to 317 the chain is Cytoplasmic; sequence RSQELRRTLKEVLLCSW. Residue Cys-315 is the site of S-palmitoyl cysteine attachment.

It belongs to the G-protein coupled receptor 1 family. In terms of assembly, interacts with MGRN1, but does not undergo MGRN1-mediated ubiquitination; this interaction competes with GNAS-binding and thus inhibits agonist-induced cAMP production. Interacts with OPN3; the interaction results in a decrease in MC1R-mediated cAMP signaling and ultimately a decrease in melanin production in melanocytes.

Its subcellular location is the cell membrane. In terms of biological role, receptor for MSH (alpha, beta and gamma) and ACTH. The activity of this receptor is mediated by G proteins which activate adenylate cyclase. Mediates melanogenesis, the production of eumelanin (black/brown) and phaeomelanin (red/yellow), via regulation of cAMP signaling in melanocytes. This chain is Melanocyte-stimulating hormone receptor (MC1R), found in Chlorocebus aethiops (Green monkey).